The chain runs to 248 residues: Proteasome subunit alpha type-5 (248 aa).

This sequence belongs to the peptidase T1A family. As to quaternary structure, the 26S proteasome consists of a 20S proteasome core and two 19S regulatory subunits. The 20S proteasome core is composed of 28 subunits that are arranged in four stacked rings, resulting in a barrel-shaped structure. The two end rings are each formed by seven alpha subunits, and the two central rings are each formed by seven beta subunits. The catalytic chamber with the active sites is on the inside of the barrel.

It localises to the cytoplasm. It is found in the nucleus. In terms of biological role, the proteasome is a multicatalytic proteinase complex which is characterized by its ability to cleave peptides with Arg, Phe, Tyr, Leu, and Glu adjacent to the leaving group at neutral or slightly basic pH. The proteasome has an ATP-dependent proteolytic activity. This is Proteasome subunit alpha type-5 (pas-5) from Caenorhabditis elegans.